Reading from the N-terminus, the 522-residue chain is Zinc finger and BTB domain-containing protein 18 (522 aa).

The BTB domain maps to 24 to 91 (CDCTVLVGDA…MYEGKLQFKD (68 aa)). Positions 121–143 (ATTEADSTKKEEDASSCSDKVES) are enriched in basic and acidic residues. A disordered region spans residues 121-165 (ATTEADSTKKEEDASSCSDKVESLSDGSSHMAGDLPSDEDEGEDE). Position 157 is a phosphoserine (serine 157). Lysine 273 participates in a covalent cross-link: Glycyl lysine isopeptide (Lys-Gly) (interchain with G-Cter in SUMO2). Residues 310–427 (EPAHLAPLRE…TFSCMYTLKR (118 aa)) are interaction with DNMT3A. C2H2-type zinc fingers lie at residues 370–392 (FMCP…LSTH), 410–432 (PTCS…ERTH), 438–460 (YTCT…AVVH), and 466–489 (HACK…RKFH). 2 positions are modified to phosphoserine: serine 516 and serine 517.

It belongs to the krueppel C2H2-type zinc-finger protein family. ZBTB18 subfamily. As to quaternary structure, interacts with DNMT3A.

The protein resides in the nucleus. Transcriptional repressor that plays a role in various developmental processes such as myogenesis and brain development. Specifically binds the consensus DNA sequence 5'-[AC]ACATCTG[GT][AC]-3' which contains the E box core, and acts by recruiting chromatin remodeling multiprotein complexes. Plays a key role in myogenesis by directly repressing the expression of ID2 and ID3, 2 inhibitors of skeletal myogenesis. Also involved in controlling cell division of progenitor cells and regulating the survival of postmitotic cortical neurons. May also play a role in the organization of chromosomes in the nucleus. This is Zinc finger and BTB domain-containing protein 18 (ZBTB18) from Bos taurus (Bovine).